The following is a 549-amino-acid chain: Chaperonin GroEL (549 aa).

ATP is bound by residues 30-33 (TLGP), Lys51, 87-91 (DGTTT), Gly415, and Asp495.

It belongs to the chaperonin (HSP60) family. In terms of assembly, forms a cylinder of 14 subunits composed of two heptameric rings stacked back-to-back. Interacts with the co-chaperonin GroES.

Its subcellular location is the cytoplasm. The catalysed reaction is ATP + H2O + a folded polypeptide = ADP + phosphate + an unfolded polypeptide.. Functionally, together with its co-chaperonin GroES, plays an essential role in assisting protein folding. The GroEL-GroES system forms a nano-cage that allows encapsulation of the non-native substrate proteins and provides a physical environment optimized to promote and accelerate protein folding. This is Chaperonin GroEL from Hahella chejuensis (strain KCTC 2396).